Consider the following 505-residue polypeptide: Maturase K (505 aa).

The protein belongs to the intron maturase 2 family. MatK subfamily.

It is found in the plastid. It localises to the chloroplast. In terms of biological role, usually encoded in the trnK tRNA gene intron. Probably assists in splicing its own and other chloroplast group II introns. The chain is Maturase K from Apocynum androsaemifolium (Spreading dogbane).